The primary structure comprises 427 residues: Glutamate-1-semialdehyde 2,1-aminomutase (427 aa).

Lysine 265 carries the post-translational modification N6-(pyridoxal phosphate)lysine.

It belongs to the class-III pyridoxal-phosphate-dependent aminotransferase family. HemL subfamily. As to quaternary structure, homodimer. It depends on pyridoxal 5'-phosphate as a cofactor.

It is found in the cytoplasm. It catalyses the reaction (S)-4-amino-5-oxopentanoate = 5-aminolevulinate. It functions in the pathway porphyrin-containing compound metabolism; protoporphyrin-IX biosynthesis; 5-aminolevulinate from L-glutamyl-tRNA(Glu): step 2/2. The protein is Glutamate-1-semialdehyde 2,1-aminomutase of Idiomarina loihiensis (strain ATCC BAA-735 / DSM 15497 / L2-TR).